The chain runs to 691 residues: Protein-glutamine gamma-glutamyltransferase E (691 aa).

Tyr110 carries the phosphotyrosine modification. At Thr111 the chain carries Phosphothreonine. 4 residues coordinate Ca(2+): Ala221, Asn224, Asn226, and Asp227. Residue Cys272 is part of the active site. Ca(2+)-binding residues include Asp301, Asp303, Asn305, Ser307, and Asp324. Catalysis depends on residues His330 and Asp353. Residues Asn393, Thr414, Glu442, and Glu447 each contribute to the Ca(2+) site.

The protein belongs to the transglutaminase superfamily. Transglutaminase family. As to quaternary structure, consists of two polypeptide chains, which are synthesized as a precursor form of a single polypeptide. It depends on Ca(2+) as a cofactor. In terms of processing, activated by proteolytic processing. In vitro activation is commonly achieved by cleavage with dispase, a neutral bacterial protease. Physiological activation may be catalyzed by CTSL and, to a lesser extent, by CTSS.

The protein localises to the cytoplasm. The enzyme catalyses L-glutaminyl-[protein] + L-lysyl-[protein] = [protein]-L-lysyl-N(6)-5-L-glutamyl-[protein] + NH4(+). Catalyzes the calcium-dependent formation of isopeptide cross-links between glutamine and lysine residues in various proteins, as well as the conjugation of polyamines to proteins. Involved in the formation of the cornified envelope (CE), a specialized component consisting of covalent cross-links of proteins beneath the plasma membrane of terminally differentiated keratinocytes. Catalyzes small proline-rich proteins and LOR cross-linking to form small interchain oligomers, which are further cross-linked by TGM1 onto the growing CE scaffold. In hair follicles, involved in cross-linking structural proteins to hardening the inner root sheath. The chain is Protein-glutamine gamma-glutamyltransferase E (TGM3) from Bos taurus (Bovine).